A 529-amino-acid polypeptide reads, in one-letter code: MSIGLTEFVTNKLAAEHPQVIPISVFIAILCLCLVIGHLLEENRWVNESITAILVGAASGTVILLISKGKSSHILVFDEELFFIYLLPPIIFNAGFQVKKKKFFHNFLTIMSFGVIGVFISTVIISFGTWWLFPKLGFKGLSARDYLAIGTIFSSTDTVCTLQILHQDETPLLYSLVFGEGVVNDATSVVLFNAVQKIQFESLTGWTALQVFGNFLYLFSTSTLLGIGVGLITSFVLKTLYFGRHSTTRELAIMVLMAYLSYMLAELFSLSGILTVFFCGVLMSHYASYNVTESSRITSRHVFAMLSFIAETFIFLYVGTDALDFTKWKTSSLSFGGTLGVSGVITALVLLGRAAFVFPLSVLTNFMNRHTERNESITFKHQVIIWWAGLMRGAVSIALAFKQFTYSGVTLDPVNAAMVTNTTIVVLFTTLVFGFLTKPLVNYLLPQDASHNTGNRGKRTEPGSPKEDATLPLLSFDESASTNFNRAKDSISLLMEQPVYTIHRYWRKFDDTYMRPIFGGPRRENQPEC.

Over 1-19 the chain is Cytoplasmic; sequence MSIGLTEFVTNKLAAEHPQ. Residues 20–40 traverse the membrane as a helical segment; the sequence is VIPISVFIAILCLCLVIGHLL. Topologically, residues 41–45 are vacuolar; that stretch reads EENRW. A helical transmembrane segment spans residues 46-66; it reads VNESITAILVGAASGTVILLI. Residues 67–73 are Cytoplasmic-facing; that stretch reads SKGKSSH. Positions 74–94 form an intramembrane region, helical; sequence ILVFDEELFFIYLLPPIIFNA. Topologically, residues 95-112 are cytoplasmic; it reads GFQVKKKKFFHNFLTIMS. The helical transmembrane segment at 113 to 133 threads the bilayer; the sequence is FGVIGVFISTVIISFGTWWLF. Topologically, residues 134-171 are vacuolar; the sequence is PKLGFKGLSARDYLAIGTIFSSTDTVCTLQILHQDETP. Residues 172–192 form a helical membrane-spanning segment; it reads LLYSLVFGEGVVNDATSVVLF. Residues 193–214 lie on the Cytoplasmic side of the membrane; sequence NAVQKIQFESLTGWTALQVFGN. A helical membrane pass occupies residues 215–235; the sequence is FLYLFSTSTLLGIGVGLITSF. At 236–250 the chain is on the vacuolar side; that stretch reads VLKTLYFGRHSTTRE. The chain crosses the membrane as a helical span at residues 251–267; it reads LAIMVLMAYLSYMLAEL. The Cytoplasmic segment spans residues 268-273; sequence FSLSGI. The chain crosses the membrane as a helical span at residues 274–291; the sequence is LTVFFCGVLMSHYASYNV. The Vacuolar portion of the chain corresponds to 292 to 301; it reads TESSRITSRH. The helical transmembrane segment at 302–322 threads the bilayer; the sequence is VFAMLSFIAETFIFLYVGTDA. Residues 323–342 are Cytoplasmic-facing; it reads LDFTKWKTSSLSFGGTLGVS. A helical transmembrane segment spans residues 343-363; it reads GVITALVLLGRAAFVFPLSVL. Over 364-380 the chain is Vacuolar; it reads TNFMNRHTERNESITFK. Asn-374 is a glycosylation site (N-linked (GlcNAc...) asparagine). Residues 381 to 401 traverse the membrane as a helical segment; sequence HQVIIWWAGLMRGAVSIALAF. Over 402 to 415 the chain is Cytoplasmic; that stretch reads KQFTYSGVTLDPVN. The helical transmembrane segment at 416 to 436 threads the bilayer; the sequence is AAMVTNTTIVVLFTTLVFGFL. Topologically, residues 437–529 are vacuolar; that stretch reads TKPLVNYLLP…GPRRENQPEC (93 aa).

This sequence belongs to the monovalent cation:proton antiporter 1 (CPA1) transporter (TC 2.A.36) family. In terms of tissue distribution, expressed at very low levels in roots and shoots.

The protein localises to the vacuole membrane. It carries out the reaction Na(+)(in) + H(+)(out) = Na(+)(out) + H(+)(in). It catalyses the reaction K(+)(in) + H(+)(out) = K(+)(out) + H(+)(in). Functionally, may act in low affinity electroneutral exchange of protons for cations such as Na(+) or K(+) across membranes. May also exchange Li(+) and Cs(+) with a lower affinity. The chain is Sodium/hydrogen exchanger 4 (NHX4) from Arabidopsis thaliana (Mouse-ear cress).